The primary structure comprises 452 residues: Bifunctional F420 biosynthesis protein FbiB (452 aa).

The segment at 1–248 (MVSAPGDHAG…AGEEDLFWLG (248 aa)) is coenzyme F420:L-glutamate ligase. GTP contacts are provided by residues 24–27 (LPEF), serine 54, and lysine 59. Position 113 (aspartate 113) interacts with a divalent metal cation. Asparagine 116 contacts GTP. Positions 154 and 155 each coordinate a divalent metal cation. Positions 249–452 (TAEAVERGRR…RDPGDGLVER (204 aa)) are dehydro-coenzyme F420-0 reductase. FMN contacts are provided by residues 264–268 (RRSVR) and alanine 292. Coenzyme F420-(gamma-Glu)n is bound at residue aspartate 324. Glycine 403 and arginine 440 together coordinate FMN.

In the N-terminal section; belongs to the CofE family. Mg(2+) serves as cofactor. Requires Mn(2+) as cofactor. K(+) is required as a cofactor.

It carries out the reaction oxidized coenzyme F420-0 + GTP + L-glutamate = oxidized coenzyme F420-1 + GDP + phosphate + H(+). It catalyses the reaction oxidized coenzyme F420-0 + FMN + H(+) = dehydro coenzyme F420-0 + FMNH2. The enzyme catalyses oxidized coenzyme F420-1 + GTP + L-glutamate = oxidized coenzyme F420-2 + GDP + phosphate + H(+). It participates in cofactor biosynthesis; coenzyme F420 biosynthesis. In terms of biological role, bifunctional enzyme that catalyzes the GTP-dependent successive addition of two or more gamma-linked L-glutamates to the L-lactyl phosphodiester of 7,8-didemethyl-8-hydroxy-5-deazariboflavin (F420-0) to form polyglutamated F420 derivatives, and the FMNH2-dependent reduction of dehydro-F420-0 to form F420-0. The sequence is that of Bifunctional F420 biosynthesis protein FbiB from Nocardia farcinica (strain IFM 10152).